Consider the following 234-residue polypeptide: 7-carboxy-7-deazaguanine synthase (234 aa).

Substrate is bound by residues Ile-36–Gly-38 and Arg-51. One can recognise a Radical SAM core domain in the interval Phe-42–Glu-234. The [4Fe-4S] cluster site is built by Cys-55, Cys-59, and Cys-62. Mg(2+) is bound at residue Thr-64. Thr-100 is a substrate binding site. Residues Gly-102, Ser-144–Lys-146, and Gln-195–Asp-198 each bind S-adenosyl-L-methionine.

It belongs to the radical SAM superfamily. 7-carboxy-7-deazaguanine synthase family. As to quaternary structure, homodimer. It depends on [4Fe-4S] cluster as a cofactor. The cofactor is S-adenosyl-L-methionine. Mg(2+) serves as cofactor.

The enzyme catalyses 6-carboxy-5,6,7,8-tetrahydropterin + H(+) = 7-carboxy-7-deazaguanine + NH4(+). The protein operates within purine metabolism; 7-cyano-7-deazaguanine biosynthesis. Catalyzes the complex heterocyclic radical-mediated conversion of 6-carboxy-5,6,7,8-tetrahydropterin (CPH4) to 7-carboxy-7-deazaguanine (CDG), a step common to the biosynthetic pathways of all 7-deazapurine-containing compounds. This Rickettsia prowazekii (strain Madrid E) protein is 7-carboxy-7-deazaguanine synthase.